The following is a 1958-amino-acid chain: Echinoderm microtubule-associated protein-like 6 (1958 aa).

WD repeat units follow at residues Gly-59–Leu-100, Val-104–Ser-145, Gly-148–Lys-187, Gly-195–Gln-233, Ala-235–Asp-273, Gly-280–Gln-321, His-323–Arg-362, Asn-364–His-403, Asp-406–Gly-445, and Gly-561–Gly-601. The tract at residues Leu-603 to Val-626 is disordered. Residues Tyr-615–Val-626 are compositionally biased toward acidic residues. WD repeat units lie at residues Gly-725 to Leu-766, Gln-770 to Thr-811, Gly-814 to Lys-853, Gly-861 to Lys-900, Ala-901 to Ala-940, His-996 to Ala-1035, Lys-1038 to Ser-1077, His-1080 to Ile-1120, Ser-1191 to Arg-1230, and Gly-1236 to Ser-1276. The span at Lys-1322 to Pro-1337 shows a compositional bias: basic and acidic residues. Positions Lys-1322–Ile-1353 are disordered. 10 WD repeats span residues Glu-1412 to Met-1456, Phe-1460 to Ser-1501, Gly-1504 to Lys-1543, Ala-1553 to Ala-1591, Ala-1593 to Phe-1638, His-1685 to Lys-1724, Ser-1726 to Arg-1767, Asp-1768 to Arg-1807, Ala-1880 to Lys-1919, and Gly-1925 to Leu-1958.

Belongs to the WD repeat EMAP family.

Its subcellular location is the cytoplasm. It is found in the cytoskeleton. May modify the assembly dynamics of microtubules, such that microtubules are slightly longer, but more dynamic. This Homo sapiens (Human) protein is Echinoderm microtubule-associated protein-like 6 (EML6).